The primary structure comprises 575 residues: Transmembrane protein 108 (575 aa).

A helical transmembrane segment spans residues 9 to 29 (YCQLLSFLLILALTEALAFAI). Positions 31–169 (EPSPRESLQV…TTTRRPPRPP (139 aa)) are interaction with SH3GL2. The interval 65 to 398 (MLTPNPDGPP…PSRVSESTIS (334 aa)) is disordered. Residues 74–87 (PSQAAAPMATPTPR) are compositionally biased toward low complexity. Polar residues predominate over residues 95–115 (HTISTIAATVTAPHSESSLST). Residues 146 to 160 (PPGATSRPTTAPPRT) are compositionally biased toward low complexity. Residues 173–407 (RKGAGNSSRP…SGAKEETVAT (235 aa)) form an interaction with DST (isoform 1) region. The span at 244 to 271 (YSSSPQPQTVAATTVPSNTSWAPTTTSL) shows a compositional bias: polar residues. Residues 290–318 (TFTSQGGTPDATAASGAPVSPQAAPVPSQ) are compositionally biased toward low complexity. Residues 329–352 (PSHSDSWLTVTPGTSRPLSTSSGV) are compositionally biased toward polar residues. Low complexity predominate over residues 353-366 (FTAATGPTPAAFDT). Residues 367-398 (SVSAPSQGIPQGASTTPQAPTHPSRVSESTIS) are compositionally biased toward polar residues. Residues 469 to 489 (IAWVILAISVPISSCSVLLTV) form a helical membrane-spanning segment. Positions 490-575 (CCMKRKKKTA…FVGNDQVSEI (86 aa)) are interaction with CYFIP2.

Interacts with DST (isoform 1). Interacts with SH3GL2. Interacts (via N-terminus) with CYFIP1 and CYFIP2; the interactions associate TMEM108 with the WAVE1 complex. In terms of processing, glycosylated.

It is found in the membrane. The protein resides in the postsynaptic density. Its subcellular location is the endosome membrane. The protein localises to the cell projection. It localises to the axon. It is found in the dendrite. The protein resides in the early endosome. Its function is as follows. Transmembrane protein required for proper cognitive functions. Involved in the development of dentate gyrus (DG) neuron circuitry, is necessary for AMPA receptors surface expression and proper excitatory postsynaptic currents of DG granule neurons. Regulates the organization and stability of the microtubule network of sensory neurons to allow axonal transport. Through the interaction with DST, mediates the docking of the dynein/dynactin motor complex to vesicle cargos for retrograde axonal transport. In hippocampal neurons, required for BDNF-dependent dendrite outgrowth. Cooperates with SH3GL2 and recruits the WAVE1 complex to facilitate actin-dependent BDNF:NTRK2 early endocytic trafficking and mediate signaling from early endosomes. The sequence is that of Transmembrane protein 108 from Homo sapiens (Human).